Reading from the N-terminus, the 529-residue chain is Peptide chain release factor 3 (529 aa).

The tr-type G domain occupies 11–280 (AKRRTFAIIS…GLVEWAPAPM (270 aa)). GTP-binding positions include 20–27 (SHPDAGKT), 88–92 (DTPGH), and 142–145 (NKLD).

The protein belongs to the TRAFAC class translation factor GTPase superfamily. Classic translation factor GTPase family. PrfC subfamily.

The protein localises to the cytoplasm. In terms of biological role, increases the formation of ribosomal termination complexes and stimulates activities of RF-1 and RF-2. It binds guanine nucleotides and has strong preference for UGA stop codons. It may interact directly with the ribosome. The stimulation of RF-1 and RF-2 is significantly reduced by GTP and GDP, but not by GMP. This chain is Peptide chain release factor 3, found in Shigella dysenteriae serotype 1 (strain Sd197).